A 199-amino-acid polypeptide reads, in one-letter code: Small ribosomal subunit protein mS38 (199 aa).

The protein belongs to the mitochondrion-specific ribosomal protein mS38 family. In terms of assembly, component of the mitochondrial small ribosomal subunit (mt-SSU). Mature mammalian 55S mitochondrial ribosomes consist of a small (28S) and a large (39S) subunit. The 28S small subunit contains a 12S ribosomal RNA (12S mt-rRNA) and 30 different proteins. The 39S large subunit contains a 16S rRNA (16S mt-rRNA), a copy of mitochondrial valine transfer RNA (mt-tRNA(Val)), which plays an integral structural role, and 52 different proteins. Interacts with Aurora-A. Ubiquitously expressed and especially highly expressed in heart, skeletal muscle and testis.

The protein resides in the mitochondrion matrix. The protein localises to the nucleus. In terms of biological role, may act as a negative regulator of Aurora-A kinase, by down-regulation through proteasome-dependent degradation. This chain is Small ribosomal subunit protein mS38 (AURKAIP1), found in Homo sapiens (Human).